The sequence spans 196 residues: MTQPIKLLVGLANPGPEYAKTRHNAGAWVVEELARVHNVTLKNEPKFFGLTGRIMVNGQDLRLLIPTTFMNLSGKAIAALAKFYQIKPEEIMVAHDELDLPPGVAKFKKGGGHGGHNGLRDTISKLGNNKDFYRLRIGIGHPGHKDKVAGFVLGKAPAKEQELLDAAADEAVRSLDILIKDGLSKAQNRLHTFKAE.

Y18 contacts tRNA. The active-site Proton acceptor is H23. F69, N71, and N117 together coordinate tRNA.

It belongs to the PTH family. In terms of assembly, monomer.

The protein localises to the cytoplasm. It catalyses the reaction an N-acyl-L-alpha-aminoacyl-tRNA + H2O = an N-acyl-L-amino acid + a tRNA + H(+). Functionally, hydrolyzes ribosome-free peptidyl-tRNAs (with 1 or more amino acids incorporated), which drop off the ribosome during protein synthesis, or as a result of ribosome stalling. Catalyzes the release of premature peptidyl moieties from peptidyl-tRNA molecules trapped in stalled 50S ribosomal subunits, and thus maintains levels of free tRNAs and 50S ribosomes. The chain is Peptidyl-tRNA hydrolase from Vibrio parahaemolyticus serotype O3:K6 (strain RIMD 2210633).